The following is a 320-amino-acid chain: Lipoyl synthase (320 aa).

A disordered region spans residues 9 to 31 (ANDARPRHPEKAHRPDQPIQRKP). The span at 12–31 (ARPRHPEKAHRPDQPIQRKP) shows a compositional bias: basic and acidic residues. Cysteine 60, cysteine 65, cysteine 71, cysteine 86, cysteine 90, cysteine 93, and serine 299 together coordinate [4Fe-4S] cluster. In terms of domain architecture, Radical SAM core spans 72-288 (WEKKHATFMI…ETTAYAKGFL (217 aa)).

It belongs to the radical SAM superfamily. Lipoyl synthase family. The cofactor is [4Fe-4S] cluster.

Its subcellular location is the cytoplasm. It carries out the reaction [[Fe-S] cluster scaffold protein carrying a second [4Fe-4S](2+) cluster] + N(6)-octanoyl-L-lysyl-[protein] + 2 oxidized [2Fe-2S]-[ferredoxin] + 2 S-adenosyl-L-methionine + 4 H(+) = [[Fe-S] cluster scaffold protein] + N(6)-[(R)-dihydrolipoyl]-L-lysyl-[protein] + 4 Fe(3+) + 2 hydrogen sulfide + 2 5'-deoxyadenosine + 2 L-methionine + 2 reduced [2Fe-2S]-[ferredoxin]. It participates in protein modification; protein lipoylation via endogenous pathway; protein N(6)-(lipoyl)lysine from octanoyl-[acyl-carrier-protein]: step 2/2. Its function is as follows. Catalyzes the radical-mediated insertion of two sulfur atoms into the C-6 and C-8 positions of the octanoyl moiety bound to the lipoyl domains of lipoate-dependent enzymes, thereby converting the octanoylated domains into lipoylated derivatives. The polypeptide is Lipoyl synthase (Methylobacterium nodulans (strain LMG 21967 / CNCM I-2342 / ORS 2060)).